The primary structure comprises 798 residues: Serine/threonine-protein kinase SIK2 (798 aa).

Positions 26-277 (YDIERTLGKG…ISQIKQHKWM (252 aa)) constitute a Protein kinase domain. ATP contacts are provided by residues 32–40 (LGKGNFAVV) and K55. The active-site Proton acceptor is D148. T181 carries the phosphothreonine modification. S185 carries the phosphoserine modification. The UBA domain occupies 302–342 (DYNEQVLGIMQTLGIDRQRTVESLQNSSYNHFAAIYYLLLE). A compositionally biased stretch (polar residues) spans 351–361 (QLSSRPATGRQ). The disordered stretch occupies residues 351 to 382 (QLSSRPATGRQQRPRSSEISNAEMPQDSLTSE). S575 carries the phosphoserine modification. The interval 672–691 (ACPQTSQTSATNGLPPSDSA) is disordered. The span at 673–685 (CPQTSQTSATNGL) shows a compositional bias: polar residues.

This sequence belongs to the protein kinase superfamily. CAMK Ser/Thr protein kinase family. SNF1 subfamily. Requires Mg(2+) as cofactor. Phosphorylated at Thr-181 by STK11/LKB1 in complex with STE20-related adapter-alpha (STRADA) pseudo kinase and CAB39. Ubiquitously expressed in embryonic tissue.

It localises to the cytoplasm. The catalysed reaction is L-seryl-[protein] + ATP = O-phospho-L-seryl-[protein] + ADP + H(+). It carries out the reaction L-threonyl-[protein] + ATP = O-phospho-L-threonyl-[protein] + ADP + H(+). With respect to regulation, activated by phosphorylation on Thr-181. Phosphorylates IRS1 in insulin-stimulated adipocytes, potentially modulating the efficiency of insulin signal transduction. Inhibits CREB activity by phosphorylating and repressing the CREB-specific coactivators, CRTC1-3. The chain is Serine/threonine-protein kinase SIK2 (SIK2) from Gallus gallus (Chicken).